The primary structure comprises 1302 residues: Multidrug resistance protein homolog 65 (1302 aa).

The tract at residues 1-23 (MERDEVSTSSSEGKSQEEAPMAE) is disordered. The Cytoplasmic portion of the chain corresponds to 1-48 (MERDEVSTSSSEGKSQEEAPMAEGLEPTEPIAFLKLFRFSTYGEIGWL). Residues 48–369 (LFFGFIMCCI…TAPFLESFAT (322 aa)) form the ABC transmembrane type-1 1 domain. A helical transmembrane segment spans residues 49 to 69 (FFGFIMCCIKALTLPAVVIIY). The Extracellular segment spans residues 70–118 (SEFTSMLVDRAMQFGTSSNVHALPLFGGGKTLTNASREENNEALYDDSI). An N-linked (GlcNAc...) asparagine glycan is attached at N103. Residues 119–147 (SYGILLTIASVVMFISGIFSVDVFNMVAL) traverse the membrane as a helical segment. The Cytoplasmic segment spans residues 148–194 (RQVTRMRIKLFSSVIRQDIGWHDLASKQNFTQSMVDDVEKIRDGISE). Residues 195 to 215 (KVGHFVYLVVGFIITVAISFS) form a helical membrane-spanning segment. Residues 216–223 (YGWKLTLA) are Extracellular-facing. The chain crosses the membrane as a helical span at residues 224–242 (VSSYIPLVILLNYYVAKFQ). The Cytoplasmic portion of the chain corresponds to 243–302 (GKLTAREQESYAGAGNLAEEILSSIRTVVSFGGEKSEVQRYENFLVPARKASQWKGAFSG). A helical transmembrane segment spans residues 303–323 (LSDAVLKSMLYLSCAGAFWYG). Residues 324–341 (VNLIIDDRNVENKEYTPA) lie on the Extracellular side of the membrane. A helical transmembrane segment spans residues 342-362 (ILMIAFFGIIVGADNIARTAP). Over 363–731 (FLESFATARG…LQLAKQEWCY (369 aa)) the chain is Cytoplasmic. The region spanning 405 to 641 (VEFQDVFFRY…EGAYYNMVRA (237 aa)) is the ABC transporter 1 domain. 440-447 (GSSGCGKS) is an ATP binding site. Residues 732–753 (LILGTISAVAVGFLYPAFAVIF) form a helical membrane-spanning segment. Residues 732–1020 (LILGTISAVA…SLAFTPAFSA (289 aa)) form the ABC transmembrane type-1 2 domain. Topologically, residues 754–776 (GEFYAALAEKDPEDALRRTAVLS) are extracellular. A helical membrane pass occupies residues 777–798 (WACLGLAFLTGLVCFLQTYLFN). Over 799 to 852 (YAGIWLTTRMRAMTFNAMVNQEVGWFDDENNSVGALSARLSGEAVDIQGAIGYP) the chain is Cytoplasmic. The helical transmembrane segment at 853–873 (LSGMIQALSNFISSVSVAMYY) threads the bilayer. A topological domain (extracellular) is located at residue N874. A helical membrane pass occupies residues 875-894 (WKLALLCLANCPIIVGSVIL). The Cytoplasmic segment spans residues 895–956 (EAKMMSNAVV…VEVLIRQKLR (62 aa)). The chain crosses the membrane as a helical span at residues 957–977 (WRGVLNSTMQASAFFAYAVAL). Over 978–993 (CYGGVLVSEGQLPFQD) the chain is Extracellular. Residues 994–1014 (IIKVSETLLYGSMMLAQSLAF) traverse the membrane as a helical segment. The Cytoplasmic segment spans residues 1015-1302 (TPAFSAALIA…AKLHKTQKDH (288 aa)). The ABC transporter 2 domain maps to 1059–1298 (VRYRGIQFRY…GGIYAKLHKT (240 aa)). Residue 1094-1101 (GHSGCGKS) coordinates ATP.

Belongs to the ABC transporter superfamily. ABCB family. Multidrug resistance exporter (TC 3.A.1.201) subfamily.

Its subcellular location is the membrane. It carries out the reaction ATP + H2O + xenobioticSide 1 = ADP + phosphate + xenobioticSide 2.. The polypeptide is Multidrug resistance protein homolog 65 (Mdr65) (Drosophila melanogaster (Fruit fly)).